Here is a 249-residue protein sequence, read N- to C-terminus: Benzil reductase ((S)-benzoin forming) (249 aa).

6 residues coordinate NADP(+): Ile-6, Asn-87, Tyr-154, Lys-158, Val-189, and Thr-191. Tyr-154 (proton acceptor) is an active-site residue.

It belongs to the short-chain dehydrogenases/reductases (SDR) family.

The protein resides in the cytoplasm. The catalysed reaction is (S)-benzoin + NADP(+) = benzil + NADPH + H(+). The enzyme catalyses 2-hydroxy-1-phenyl-1-propanone + NADP(+) = 1-phenyl-1,2-propanedione + NADPH + H(+). With respect to regulation, inhibited by Cibacron blue 3GA, a general SDR family inhibitor. Its function is as follows. Reduces benzil stereospecifically to (S)-benzoin. Can also reduce 1-phenyl-1,2-propanedione, 1,4-naphthoquinone, 1-(4-methyl-phenyl)-2-phenyl-ethane-1,2-dione, 1-(4-fluoro-phenyl)-2-phenyl-ethane-1,2-dione, methyl benzoylformate and p-nitrobenzaldehyde in decreasing order. The chain is Benzil reductase ((S)-benzoin forming) from Bacillus cereus.